We begin with the raw amino-acid sequence, 94 residues long: Sapecin (94 aa).

Positions 1-23 (MKSFIVLAVTLCLAAFFMGQSVA) are cleaved as a signal peptide. The propeptide occupies 24–54 (SPAAAAEESKFVDGLHALKTIEPELHGRYKR). 3 cysteine pairs are disulfide-bonded: Cys-57-Cys-84, Cys-70-Cys-90, and Cys-74-Cys-92.

This sequence belongs to the invertebrate defensin family. Type 1 subfamily. In terms of tissue distribution, hemocytes and fat body.

It is found in the secreted. Its function is as follows. Sapecins, which are potent bactericidal proteins, are produced in response to injury. Sapecin is cytotoxic to Gram-positive bacteria, and to a lesser extent against Gram-negative bacteria. The protein is Sapecin of Sarcophaga peregrina (Flesh fly).